The primary structure comprises 912 residues: Protein translocase subunit SecA (912 aa).

Residues Gln87, 105-109 (GEGKT), and Asp508 each bind ATP. Residues 855–912 (QHQDAGGYGADEEVEQMQGGNAPVPVSQVTRDEPKVGRNDPCPCGSGKKYKHCHGQLS) form a disordered region. Residues Cys896, Cys898, Cys907, and His908 each coordinate Zn(2+). Residues 902–912 (KKYKHCHGQLS) are compositionally biased toward basic residues.

The protein belongs to the SecA family. Monomer and homodimer. Part of the essential Sec protein translocation apparatus which comprises SecA, SecYEG and auxiliary proteins SecDF-YajC and YidC. Requires Zn(2+) as cofactor.

The protein localises to the cell inner membrane. It localises to the cytoplasm. The catalysed reaction is ATP + H2O + cellular proteinSide 1 = ADP + phosphate + cellular proteinSide 2.. In terms of biological role, part of the Sec protein translocase complex. Interacts with the SecYEG preprotein conducting channel. Has a central role in coupling the hydrolysis of ATP to the transfer of proteins into and across the cell membrane, serving both as a receptor for the preprotein-SecB complex and as an ATP-driven molecular motor driving the stepwise translocation of polypeptide chains across the membrane. This chain is Protein translocase subunit SecA, found in Xanthomonas campestris pv. campestris (strain 8004).